Reading from the N-terminus, the 365-residue chain is Aminomethyltransferase (365 aa).

The protein belongs to the GcvT family. As to quaternary structure, the glycine cleavage system is composed of four proteins: P, T, L and H.

The catalysed reaction is N(6)-[(R)-S(8)-aminomethyldihydrolipoyl]-L-lysyl-[protein] + (6S)-5,6,7,8-tetrahydrofolate = N(6)-[(R)-dihydrolipoyl]-L-lysyl-[protein] + (6R)-5,10-methylene-5,6,7,8-tetrahydrofolate + NH4(+). Functionally, the glycine cleavage system catalyzes the degradation of glycine. This is Aminomethyltransferase from Chlorobium phaeobacteroides (strain DSM 266 / SMG 266 / 2430).